The following is a 274-amino-acid chain: MQFSKMHGLGNDFMVVDAVTQNVYFSPELIRRLADRHTGVGFDQMLVVEPPYDPELDFHYRIFNADGSEVSQCGNGARCFARFVRLKGLTNKRDISVSTQTGRMILSVTEDELVCVNMGEPNFEPQSVPFRAAKAEKTYILRAAEHTVLCGVVSMGNPHCVMQVDDVSVANVALLGPVLESHERFPERANIGFMQVVSREHIRLRVYERGAGETQACGSGACAAVAVGIQQELLGEEVHVELPGGSLHISWKGPGHPLYMTGPATHVYDGFIHL.

Asn-11, Gln-44, and Asn-64 together coordinate substrate. Residue Cys-73 is the Proton donor of the active site. Substrate is bound by residues 74–75 (GN), Asn-157, Asn-190, and 208–209 (ER). The Proton acceptor role is filled by Cys-217. A substrate-binding site is contributed by 218–219 (GS).

The protein belongs to the diaminopimelate epimerase family. As to quaternary structure, homodimer.

It is found in the cytoplasm. It catalyses the reaction (2S,6S)-2,6-diaminopimelate = meso-2,6-diaminopimelate. It participates in amino-acid biosynthesis; L-lysine biosynthesis via DAP pathway; DL-2,6-diaminopimelate from LL-2,6-diaminopimelate: step 1/1. Catalyzes the stereoinversion of LL-2,6-diaminopimelate (L,L-DAP) to meso-diaminopimelate (meso-DAP), a precursor of L-lysine and an essential component of the bacterial peptidoglycan. The protein is Diaminopimelate epimerase of Yersinia enterocolitica serotype O:8 / biotype 1B (strain NCTC 13174 / 8081).